The chain runs to 1338 residues: P-type sodium-transporting ATPase4 (1338 aa).

A disordered region spans residues 1-106 (MAARASADKL…KSISSVSQMH (106 aa)). Positions 55–69 (AEEKVAGHDGESPRR) are enriched in basic and acidic residues. A compositionally biased stretch (polar residues) spans 91–104 (GHSQLGKSISSVSQ). Helical transmembrane passes span 229-249 (IFIQQFLSPVVLLLLVAAIAS), 255-275 (WVEGAAIFIIVTLNASLATYM), 418-438 (LGGMIGLIAICVLIIVVVVAI), 456-476 (IVLVAVGFAVSSIPEGLPMVV), 985-1005 (FVCFLLGTNIGEIIYLTIAIA), 1068-1088 (IFEAGCVLMSLALGLYLCTGV), 1261-1281 (MHLACSISATLTSLLTIVPGI), and 1288-1308 (CALPWYLYLFAIGCGFVNLIL).

It belongs to the cation transport ATPase (P-type) (TC 3.A.3) family.

The protein resides in the cell membrane. The enzyme catalyses Na(+)(in) + ATP + H2O = Na(+)(out) + ADP + phosphate + H(+). Inhibited by cipargamin, a synthetic spiroindolone. Inhibited by pyrazoleamide PA21A050, structurally unrelated to the spiroindolones. Inhibited by (+)-SJ733, a dihydroisoquinolone compound. Sodium-exporting ATPase. Required for the extrusion of Na(+) from the parasites to maintain a low cytosolic concentration of Na(+). Required for maintaining the viability of extracellular parasites but not for intracellular growth, egress or invasion. Involved in parasite virulence. The polypeptide is P-type sodium-transporting ATPase4 (Toxoplasma gondii (strain ATCC 50861 / VEG)).